Reading from the N-terminus, the 147-residue chain is Small ribosomal subunit protein uS12 (147 aa).

It belongs to the universal ribosomal protein uS12 family. As to quaternary structure, part of the 30S ribosomal subunit.

In terms of biological role, with S4 and S5 plays an important role in translational accuracy. Located at the interface of the 30S and 50S subunits. This chain is Small ribosomal subunit protein uS12, found in Pyrobaculum islandicum (strain DSM 4184 / JCM 9189 / GEO3).